Reading from the N-terminus, the 340-residue chain is RNA 3'-terminal phosphate cyclase (340 aa).

ATP contacts are provided by residues Gln-102 and 284–288 (FLGDQ). Residue His-308 is the Tele-AMP-histidine intermediate of the active site.

Belongs to the RNA 3'-terminal cyclase family. Type 1 subfamily.

The protein resides in the cytoplasm. The catalysed reaction is a 3'-end 3'-phospho-ribonucleotide-RNA + ATP = a 3'-end 2',3'-cyclophospho-ribonucleotide-RNA + AMP + diphosphate. In terms of biological role, catalyzes the conversion of 3'-phosphate to a 2',3'-cyclic phosphodiester at the end of RNA. The mechanism of action of the enzyme occurs in 3 steps: (A) adenylation of the enzyme by ATP; (B) transfer of adenylate to an RNA-N3'P to produce RNA-N3'PP5'A; (C) and attack of the adjacent 2'-hydroxyl on the 3'-phosphorus in the diester linkage to produce the cyclic end product. The biological role of this enzyme is unknown but it is likely to function in some aspects of cellular RNA processing. In Thermococcus onnurineus (strain NA1), this protein is RNA 3'-terminal phosphate cyclase.